A 51-amino-acid chain; its full sequence is Defensin-like protein 1 (51 aa).

Position 1 is a pyrrolidone carboxylic acid (Gln-1). 4 disulfide bridges follow: Cys-4–Cys-51, Cys-15–Cys-36, Cys-21–Cys-45, and Cys-25–Cys-47.

In terms of assembly, forms oligomers in its native state.

Possesses antifungal activity sensitive to inorganic cations. The polypeptide is Defensin-like protein 1 (Sinapis alba (White mustard)).